Here is a 265-residue protein sequence, read N- to C-terminus: Cell adhesion molecule CEACAM7 (265 aa).

A signal peptide spans 1-35 (MGSPSACPYRVCIPWQGLLLTASLLTFWNLPNSAQ). Positions 36–142 (TNIDVVPFNV…EEVTRQFYVF (107 aa)) constitute an Ig-like V-type domain. 7 N-linked (GlcNAc...) asparagine glycosylation sites follow: Asn57, Asn85, Asn105, Asn112, Asn174, Asn183, and Asn198. Positions 146 to 233 (PKPSITSNNF…ASRSDPVTLN (88 aa)) constitute an Ig-like C2-type domain. A disulfide bond links Cys168 and Cys216. Ser242 carries GPI-anchor amidated serine lipidation. Residues 243-265 (SPDLSAGTAVSIMIGVLAGMALI) constitute a propeptide, removed in mature form.

Belongs to the immunoglobulin superfamily. CEA family. As to quaternary structure, homodimer. In terms of tissue distribution, expressed in columnar epithelial cells of the colon (at protein level). Strongly down-regulated in colonic adenocarcinomas.

Its subcellular location is the cell membrane. The protein resides in the apical cell membrane. The protein is Cell adhesion molecule CEACAM7 of Homo sapiens (Human).